The sequence spans 608 residues: CTP synthase (608 aa).

Positions 1–271 are amidoligase domain; sequence MGQAHITKHI…DAYVVRRLGL (271 aa). Residue S18 participates in CTP binding. S18 serves as a coordination point for UTP. ATP is bound by residues 19–24 and D76; that span reads SLGKGL. D76 and E145 together coordinate Mg(2+). Residues 152–154, 192–197, and K228 contribute to the CTP site; these read DIE and KTKPTQ. UTP contacts are provided by residues 192 to 197 and K228; that span reads KTKPTQ. Positions 296–545 constitute a Glutamine amidotransferase type-1 domain; that stretch reads TIAIVGKYVD…VAAAVAHADR (250 aa). G359 is a binding site for L-glutamine. The active-site Nucleophile; for glutamine hydrolysis is C386. L-glutamine contacts are provided by residues 387–390, E410, and R471; that span reads LGLQ. Catalysis depends on residues H518 and E520. The interval 550–608 is disordered; that stretch reads LPVDLPSEDAPTPENGVPENGAAQTRGVTAGRSGGSIRRGASASRPSVSSNGTAALVSP. Low complexity predominate over residues 584 to 594; sequence GSIRRGASASR.

It belongs to the CTP synthase family. As to quaternary structure, homotetramer.

It catalyses the reaction UTP + L-glutamine + ATP + H2O = CTP + L-glutamate + ADP + phosphate + 2 H(+). The enzyme catalyses L-glutamine + H2O = L-glutamate + NH4(+). It carries out the reaction UTP + NH4(+) + ATP = CTP + ADP + phosphate + 2 H(+). It functions in the pathway pyrimidine metabolism; CTP biosynthesis via de novo pathway; CTP from UDP: step 2/2. With respect to regulation, allosterically activated by GTP, when glutamine is the substrate; GTP has no effect on the reaction when ammonia is the substrate. The allosteric effector GTP functions by stabilizing the protein conformation that binds the tetrahedral intermediate(s) formed during glutamine hydrolysis. Inhibited by the product CTP, via allosteric rather than competitive inhibition. In terms of biological role, catalyzes the ATP-dependent amination of UTP to CTP with either L-glutamine or ammonia as the source of nitrogen. Regulates intracellular CTP levels through interactions with the four ribonucleotide triphosphates. The protein is CTP synthase of Frankia casuarinae (strain DSM 45818 / CECT 9043 / HFP020203 / CcI3).